The primary structure comprises 694 residues: Elongation factor G (694 aa).

In terms of domain architecture, tr-type G spans 10 to 285 (EKTRNIGIMA…AVLDYLPSPV (276 aa)). Residues 19-26 (AHIDAGKT), 83-87 (DTPGH), and 137-140 (NKMD) each bind GTP.

It belongs to the TRAFAC class translation factor GTPase superfamily. Classic translation factor GTPase family. EF-G/EF-2 subfamily.

The protein localises to the cytoplasm. In terms of biological role, catalyzes the GTP-dependent ribosomal translocation step during translation elongation. During this step, the ribosome changes from the pre-translocational (PRE) to the post-translocational (POST) state as the newly formed A-site-bound peptidyl-tRNA and P-site-bound deacylated tRNA move to the P and E sites, respectively. Catalyzes the coordinated movement of the two tRNA molecules, the mRNA and conformational changes in the ribosome. The chain is Elongation factor G from Limosilactobacillus fermentum (strain NBRC 3956 / LMG 18251) (Lactobacillus fermentum).